The primary structure comprises 248 residues: Homeobox protein BarH-like 1 (248 aa).

The segment at residues 135-194 (GRRSRTVFTELQLMGLEKRFEKQKYLSTPDRIDLAESLGLSQLQVKTWYQNRRMKWKKIV) is a DNA-binding region (homeobox). Residues 197 to 248 (GGGLESPTKPKGRPKKNSIPTSEQLSEQERTREADRLSDGGASSLSDANQEE) are disordered. Residues 223-234 (EQERTREADRLS) show a composition bias toward basic and acidic residues. Residues 237–248 (GASSLSDANQEE) are compositionally biased toward polar residues.

It belongs to the BAR homeobox family.

The protein localises to the nucleus. Functionally, transcription factor, is involved in craniofacial development, and in stomach organogenesis. This Danio rerio (Zebrafish) protein is Homeobox protein BarH-like 1 (barx1).